The chain runs to 642 residues: A-kinase anchor protein 8-like (642 aa).

The sufficient for activation of CTE-mediated expression stretch occupies residues 1-269 (MSYTGFVQGS…MRRTWKTWTT (269 aa)). An Asymmetric dimethylarginine; alternate modification is found at R209. R209 carries the omega-N-methylarginine; alternate modification. Omega-N-methylarginine occurs at positions 218, 238, and 248. Residue K258 is modified to N6-acetyllysine. The segment at 265-382 (KTWTTADFRT…QDKQKKRQRD (118 aa)) is disordered. The residue at position 268 (T268) is a Phosphothreonine. The short motif at 275-280 (KKKKRK) is the Nuclear localization signal element. A Nuclear export signal (NES) motif is present at residues 281–297 (QGGSPDEPDSKATRTDC). S284 carries the post-translational modification Phosphoserine. Positions 288–297 (PDSKATRTDC) are enriched in basic and acidic residues. T293 carries the phosphothreonine modification. Phosphoserine is present on S298. Residues 299–315 (DNSDSDNDEGTEGEAAE) show a composition bias toward acidic residues. The segment covering 338–350 (EDGREEGKEDPEK) has biased composition (basic and acidic residues). A Nuclear localization signal motif is present at residues 363–365 (KRK). C2H2 AKAP95-type zinc fingers lie at residues 392–414 (CSLCKYRTFYEDEMGSHLDSKFH) and 485–508 (CAACDLFIPMQFGIIQKHLKTMDH). The interval 546–642 (GENPFTDNPE…EDDEEGGGGP (97 aa)) is disordered. Over residues 553-564 (NPEEEKEQDEVE) the composition is skewed to acidic residues. Residues 585-605 (AQPPVPLEPAPGTTTPPPPPP) show a composition bias toward pro residues. Acidic residues predominate over residues 631–642 (DMEDDEEGGGGP).

This sequence belongs to the AKAP95 family. As to quaternary structure, interacts (via N-terminus) with DHX9 (via RGG region). Interacts with TMPO isoform Beta, PRPF40A, RNF43, lamin-B. Interacts with HDAC3; increased during mitosis. Post-translationally, phosphorylated on serine or threonine residues possibly by PKA.

The protein resides in the nucleus. It localises to the nucleus matrix. Its subcellular location is the nucleus speckle. It is found in the PML body. The protein localises to the cytoplasm. Functionally, could play a role in constitutive transport element (CTE)-mediated gene expression by association with DHX9. Increases CTE-dependent nuclear unspliced mRNA export. Proposed to target PRKACA to the nucleus but does not seem to be implicated in the binding of regulatory subunit II of PKA. May be involved in nuclear envelope breakdown and chromatin condensation. May be involved in anchoring nuclear membranes to chromatin in interphase and in releasing membranes from chromating at mitosis. May regulate the initiation phase of DNA replication when associated with TMPO isoform Beta. Required for cell cycle G2/M transition and histone deacetylation during mitosis. In mitotic cells recruits HDAC3 to the vicinity of chromatin leading to deacetylation and subsequent phosphorylation at 'Ser-10' of histone H3; in this function seems to act redundantly with AKAP8. May be involved in regulation of pre-mRNA splicing. This is A-kinase anchor protein 8-like (Akap8l) from Mus musculus (Mouse).